A 4485-amino-acid chain; its full sequence is Dynein gamma chain, flagellar outer arm (4485 aa).

The segment at methionine 1 to glutamate 1780 is stem. 5 coiled-coil regions span residues isoleucine 449–lysine 469, valine 804–tyrosine 838, valine 1093–isoleucine 1114, aspartate 1275–leucine 1297, and lysine 1699–threonine 1727. 4 AAA regions span residues tyrosine 1781–threonine 2002, lysine 2061–lysine 2279, threonine 2384–glycine 2638, and lysine 2763–tyrosine 3013. ATP-binding positions include glycine 1819 to threonine 1826, glycine 2099 to serine 2106, glycine 2425 to threonine 2432, and glycine 2802 to glutamine 2809. Coiled-coil stretches lie at residues alanine 3077–glutamine 3099, glutamate 3196–glutamate 3227, lysine 3265–glutamate 3343, and glutamate 3569–arginine 3663. The interval alanine 3077–glutamate 3343 is stalk. AAA regions lie at residues leucine 3412–glutamate 3643 and alanine 3857–asparagine 4071.

The protein belongs to the dynein heavy chain family. In terms of assembly, consists of at least 3 heavy chains (alpha, beta and gamma), 2 intermediate chains and 8 light chains.

It is found in the cell projection. Its subcellular location is the cilium. The protein localises to the flagellum. It localises to the cytoplasm. The protein resides in the cytoskeleton. It is found in the flagellum axoneme. Its function is as follows. Force generating protein of eukaryotic cilia and flagella. Produces force towards the minus ends of microtubules. Dynein has ATPase activity; the force-producing power stroke is thought to occur on release of ADP. This is Dynein gamma chain, flagellar outer arm (ODA2) from Chlamydomonas reinhardtii (Chlamydomonas smithii).